Here is a 616-residue protein sequence, read N- to C-terminus: Xaa-Pro aminopeptidase app-1 (616 aa).

Positions 78 and 392 each coordinate a peptide. The Zn(2+) site is built by D413, D424, and H487. The a peptide site is built by H487, H496, and E522. Residues E522 and E536 each contribute to the Zn(2+) site.

Belongs to the peptidase M24B family. In terms of assembly, homodimer. May interact with pid-2, pid-4 and pid-5. The cofactor is Zn(2+). As to expression, specifically expressed in the intestine.

It is found in the cytoplasm. It catalyses the reaction Release of any N-terminal amino acid, including proline, that is linked to proline, even from a dipeptide or tripeptide.. Its activity is regulated as follows. Strongly inhibited by the metal ion chelators EDTA and 1,10-phenanthroline. Also inhibited by apstatin. Activity towards bradykinin is inhibited by Mn(2+) and Zn(2+) at all concentrations tested, whereas Co(2+) is inhibitory at concentrations above 100 uM and activatory at 10 uM. In terms of biological role, catalyzes the removal of a penultimate prolyl residue from the N-termini of peptides, such as Arg-Pro-Pro. Has activity towards the flp-9 neuropeptide KPSFVRF-amide. This Caenorhabditis elegans protein is Xaa-Pro aminopeptidase app-1.